The chain runs to 156 residues: Small ribosomal subunit protein uS7 (156 aa).

This sequence belongs to the universal ribosomal protein uS7 family. In terms of assembly, part of the 30S ribosomal subunit. Contacts proteins S9 and S11.

In terms of biological role, one of the primary rRNA binding proteins, it binds directly to 16S rRNA where it nucleates assembly of the head domain of the 30S subunit. Is located at the subunit interface close to the decoding center, probably blocks exit of the E-site tRNA. This Streptococcus equi subsp. equi (strain 4047) protein is Small ribosomal subunit protein uS7.